The primary structure comprises 208 residues: Large ribosomal subunit protein uL3 (208 aa).

The interval 123 to 147 (RHGQSRGPMAHGSRYHRRPGSMGPV) is disordered.

This sequence belongs to the universal ribosomal protein uL3 family. As to quaternary structure, part of the 50S ribosomal subunit. Forms a cluster with proteins L14 and L19.

One of the primary rRNA binding proteins, it binds directly near the 3'-end of the 23S rRNA, where it nucleates assembly of the 50S subunit. The chain is Large ribosomal subunit protein uL3 from Streptococcus gordonii (strain Challis / ATCC 35105 / BCRC 15272 / CH1 / DL1 / V288).